Consider the following 247-residue polypeptide: Trypsin-2 (247 aa).

The first 15 residues, 1–15, serve as a signal peptide directing secretion; sequence MNLLLILTFVAAAVA. Positions 16–23 are cleaved as a propeptide — activation peptide; it reads APFDDDDK. A Peptidase S1 domain is found at 24–244; sequence IVGGYICEEN…YVDWIKDTIA (221 aa). Intrachain disulfides connect Cys30/Cys160, Cys48/Cys64, Cys171/Cys185, and Cys196/Cys220. His63 serves as the catalytic Charge relay system. Residues Glu75, Asn77, Val80, and Glu85 each coordinate Ca(2+). The active-site Charge relay system is the Asp107. Position 154 is a sulfotyrosine (Tyr154). Ser200 acts as the Charge relay system in catalysis.

This sequence belongs to the peptidase S1 family. Requires Ca(2+) as cofactor. Sulfated on tyrosine. In terms of processing, sulfation at Tyr-154 increases selectivity towards basic versus apolar residues at the P2' position of inhibitors that bind in a substrate-like fashion. Although the increase in selectivity is relatively small, it may facilitate digestion of a broader range of dietary proteins. Expressed in Paneth cells, at the base of small intestinal crypts.

Its subcellular location is the secreted. The protein resides in the extracellular space. The catalysed reaction is Preferential cleavage: Arg-|-Xaa, Lys-|-Xaa.. In terms of biological role, in the ileum, may be involved in defensin processing, including DEFA5. In Homo sapiens (Human), this protein is Trypsin-2 (PRSS2).